The chain runs to 277 residues: 4-hydroxybenzoate octaprenyltransferase (277 aa).

Transmembrane regions (helical) follow at residues 24-44 (FAAAGGIPSSSILIIFILGVI), 81-101 (VEAKVLFFVLLIIAFLLDLSL), 102-122 (NQYAFLLSFVAVALAVIYPFM), 129-149 (PQVVLGMAFGWAIPMAYGAVI), 152-172 (LPLTCWLLFLANILWTVAYDT), 201-221 (IIALLQFLSLILFILFGWLSE), 224-244 (IGYFIVLALTSTLFIYQCWLT), and 255-275 (AFLNNNYFGFGIFIAILVGIY).

Belongs to the UbiA prenyltransferase family. It depends on Mg(2+) as a cofactor.

Its subcellular location is the cell inner membrane. It catalyses the reaction all-trans-octaprenyl diphosphate + 4-hydroxybenzoate = 4-hydroxy-3-(all-trans-octaprenyl)benzoate + diphosphate. Its pathway is cofactor biosynthesis; ubiquinone biosynthesis. In terms of biological role, catalyzes the prenylation of para-hydroxybenzoate (PHB) with an all-trans polyprenyl group. Mediates the second step in the final reaction sequence of ubiquinone-8 (UQ-8) biosynthesis, which is the condensation of the polyisoprenoid side chain with PHB, generating the first membrane-bound Q intermediate 3-octaprenyl-4-hydroxybenzoate. This is 4-hydroxybenzoate octaprenyltransferase from Haemophilus ducreyi (strain 35000HP / ATCC 700724).